The primary structure comprises 21 residues: Kassinatuerin-1 (21 aa).

Isoleucine 21 carries the post-translational modification Isoleucine amide.

In terms of tissue distribution, expressed by the skin dorsal glands.

The protein resides in the secreted. Shows broad-spectrum antimicrobial activity against the Gram-negative bacterium E.coli (MIC=6.25 uM), K.pneumoniae (MIC=25 uM), E.cloacae (MIC=6.25 uM), P.aeruginosa (MIC=25 uM), the Gram-positive bacterium S.aureus (MIC=6.25 uM), S.epidermidis (MIC=6.25 uM), E.faecalis (MIC=12.5 uM), and the fungus C.albicans (MIC=100 uM). Has no antimicrobial effect against P.mirabilis (MIC&gt;100 uM). Has relatively high cytolytic and hemolytic activities. Its alpha-helix has considerable amphipathic character. The protein is Kassinatuerin-1 of Kassina senegalensis (Senegal running frog).